Consider the following 128-residue polypeptide: Large ribosomal subunit protein bL17 (128 aa).

Belongs to the bacterial ribosomal protein bL17 family. As to quaternary structure, part of the 50S ribosomal subunit. Contacts protein L32.

This is Large ribosomal subunit protein bL17 from Enterobacter sp. (strain 638).